Reading from the N-terminus, the 209-residue chain is MGKVHVYDHPLIQHKMTIMRKVETGTKQFRELVDEVSSLMAYEITRSLPLTDVEIETPVSVSTQKMIAGKKLGIVPILRAGLGMVDGFLKMMPNVKVGHIGLYRDPETLEPHEYYLKLPTDVTERDFIVVDPMLATGGSAVDAIASLKKHGAKSIKLACLCAAPEGVERVQAEHPDVEIYLAALDEKLNDHGYIVPGLGDAGDRLFGTK.

5-phospho-alpha-D-ribose 1-diphosphate-binding positions include arginine 79, arginine 104, and 131-139 (DPMLATGGS). Uracil is bound by residues isoleucine 194 and 199-201 (GDA). Aspartate 200 is a 5-phospho-alpha-D-ribose 1-diphosphate binding site.

Belongs to the UPRTase family. It depends on Mg(2+) as a cofactor.

It catalyses the reaction UMP + diphosphate = 5-phospho-alpha-D-ribose 1-diphosphate + uracil. It participates in pyrimidine metabolism; UMP biosynthesis via salvage pathway; UMP from uracil: step 1/1. With respect to regulation, allosterically activated by GTP. Catalyzes the conversion of uracil and 5-phospho-alpha-D-ribose 1-diphosphate (PRPP) to UMP and diphosphate. In Exiguobacterium sp. (strain ATCC BAA-1283 / AT1b), this protein is Uracil phosphoribosyltransferase.